The sequence spans 78 residues: Large ribosomal subunit protein bL28 (78 aa).

This sequence belongs to the bacterial ribosomal protein bL28 family.

The polypeptide is Large ribosomal subunit protein bL28 (Flavobacterium psychrophilum (strain ATCC 49511 / DSM 21280 / CIP 103535 / JIP02/86)).